We begin with the raw amino-acid sequence, 325 residues long: GMP reductase (325 aa).

C174 acts as the Thioimidate intermediate in catalysis. Position 203–226 (203–226 (IIADGGIRTHGDIAKSIRFGATMV)) interacts with NADP(+).

The protein belongs to the IMPDH/GMPR family. GuaC type 2 subfamily.

The enzyme catalyses IMP + NH4(+) + NADP(+) = GMP + NADPH + 2 H(+). Catalyzes the irreversible NADPH-dependent deamination of GMP to IMP. It functions in the conversion of nucleobase, nucleoside and nucleotide derivatives of G to A nucleotides, and in maintaining the intracellular balance of A and G nucleotides. In Helicobacter pylori (strain G27), this protein is GMP reductase.